Here is a 243-residue protein sequence, read N- to C-terminus: PHO85 cyclin-like protein psl1 (243 aa).

The span at 211–224 shows a compositional bias: polar residues; that stretch reads ESPISHTPQQNQQD. The interval 211–231 is disordered; it reads ESPISHTPQQNQQDEQPRRPI.

It belongs to the cyclin family. PHO80 subfamily. As to quaternary structure, forms a cyclin-CDK complex with pef1.

The protein resides in the cytoplasm. Its subcellular location is the nucleus. In terms of biological role, cyclin partner of the cyclin-dependent kinase (CDK) pef1 (PHO85 homolog). This chain is PHO85 cyclin-like protein psl1 (psl1), found in Schizosaccharomyces pombe (strain 972 / ATCC 24843) (Fission yeast).